A 377-amino-acid polypeptide reads, in one-letter code: Palmitoyltransferase ZDHHC16 (377 aa).

Topologically, residues 1–77 (MRGQRSLLLG…VYWLVDNVIR (77 aa)) are cytoplasmic. Residues 78-98 (WFGVVFVVLVIVLTGSIVAIA) traverse the membrane as a helical segment. The Lumenal segment spans residues 99–116 (YLCVLPLILRTYSVPRLC). The chain crosses the membrane as a helical span at residues 117 to 137 (WHFFYSHWNLILIVFHYYQAI). Residues 138-198 (TTPPGYPPQG…NNCVGHYNHR (61 aa)) lie on the Cytoplasmic side of the membrane. One can recognise a DHHC domain in the interval 155–205 (SICKKCIYPKPARTHHCSICNRCVLKMDHHCPWLNNCVGHYNHRYFFSFCF). Cys185 (S-palmitoyl cysteine intermediate) is an active-site residue. The chain crosses the membrane as a helical span at residues 199-219 (YFFSFCFFMTLGCVYCSYGSW). Residues 220 to 266 (DLFREAYAAIEKMKQLDKNKLQAVANQTYHQTPPPTFSFRERMTHKS) lie on the Lumenal side of the membrane. The helical transmembrane segment at 267–287 (LVYLWFLCSSVALALGALTVW) threads the bilayer. The Cytoplasmic portion of the chain corresponds to 288–377 (HAVLISRGET…TAHSASVMAV (90 aa)).

This sequence belongs to the DHHC palmitoyltransferase family. Interacts with ABL1. Interacts with COPS5/JAB1. In terms of tissue distribution, widely expressed.

The protein localises to the endoplasmic reticulum membrane. The enzyme catalyses L-cysteinyl-[protein] + hexadecanoyl-CoA = S-hexadecanoyl-L-cysteinyl-[protein] + CoA. Functionally, palmitoyl acyltransferase that mediates palmitoylation of proteins such as PLN and ZDHHC6. Required during embryonic heart development and cardiac function, possibly by mediating palmitoylation of PLN, thereby affecting PLN phosphorylation and homooligomerization. Also required for eye development. Palmitoylates ZDHHC6, affecting the quaternary assembly of ZDHHC6, its localization, stability and function. May play a role in DNA damage response. May be involved in apoptosis regulation. Involved in the proliferation of neural stem cells by regulating the FGF/ERK pathway. In Homo sapiens (Human), this protein is Palmitoyltransferase ZDHHC16.